A 519-amino-acid chain; its full sequence is Maturase K (519 aa).

The protein belongs to the intron maturase 2 family. MatK subfamily.

It localises to the plastid. The protein localises to the chloroplast. Its function is as follows. Usually encoded in the trnK tRNA gene intron. Probably assists in splicing its own and other chloroplast group II introns. This is Maturase K from Dioscorea elephantipes (Elephant's foot yam).